Consider the following 342-residue polypeptide: S-adenosylmethionine:tRNA ribosyltransferase-isomerase (342 aa).

It belongs to the QueA family. As to quaternary structure, monomer.

Its subcellular location is the cytoplasm. It catalyses the reaction 7-aminomethyl-7-carbaguanosine(34) in tRNA + S-adenosyl-L-methionine = epoxyqueuosine(34) in tRNA + adenine + L-methionine + 2 H(+). It participates in tRNA modification; tRNA-queuosine biosynthesis. Transfers and isomerizes the ribose moiety from AdoMet to the 7-aminomethyl group of 7-deazaguanine (preQ1-tRNA) to give epoxyqueuosine (oQ-tRNA). In Listeria monocytogenes serotype 4a (strain HCC23), this protein is S-adenosylmethionine:tRNA ribosyltransferase-isomerase.